Consider the following 177-residue polypeptide: ATP-dependent protease subunit HslV (177 aa).

Residue T6 is part of the active site. G161, C164, and T167 together coordinate Na(+).

Belongs to the peptidase T1B family. HslV subfamily. As to quaternary structure, a double ring-shaped homohexamer of HslV is capped on each side by a ring-shaped HslU homohexamer. The assembly of the HslU/HslV complex is dependent on binding of ATP.

The protein resides in the cytoplasm. It carries out the reaction ATP-dependent cleavage of peptide bonds with broad specificity.. With respect to regulation, allosterically activated by HslU binding. Its function is as follows. Protease subunit of a proteasome-like degradation complex believed to be a general protein degrading machinery. This Petrotoga mobilis (strain DSM 10674 / SJ95) protein is ATP-dependent protease subunit HslV.